The following is a 372-amino-acid chain: Septin-1 (372 aa).

A Septin-type G domain is found at 27–301 (KGFDFTLMVA…EGYRARCLQS (275 aa)). The G1 motif stretch occupies residues 37 to 44 (GESGLGKS). GTP contacts are provided by residues 37 to 44 (GESGLGKS), T71, G97, and 176 to 184 (KADALMPQE). Residues 94 to 97 (DTPG) are G3 motif. Residues 175–178 (GKAD) form a G4 motif region. S211 is subject to Phosphoserine. Residues G234 and R250 each coordinate GTP. Residue S253 is modified to Phosphoserine; by AURKB. At T256 the chain carries Phosphothreonine. S312 and S320 each carry phosphoserine; by AURKB. Residues 352 to 372 (LEKMQAQMQQSQAQGEQSDAL) form a disordered region. Over residues 355–372 (MQAQMQQSQAQGEQSDAL) the composition is skewed to low complexity.

Belongs to the TRAFAC class TrmE-Era-EngA-EngB-Septin-like GTPase superfamily. Septin GTPase family. In terms of assembly, septins polymerize into heterooligomeric protein complexes that form filaments, and can associate with cellular membranes, actin filaments and microtubules. GTPase activity is required for filament formation. Interacts with AURKB. As to expression, expressed at high levels in lymphoid and hematopoietic tissues.

It localises to the cytoplasm. The protein resides in the cytoskeleton. The protein localises to the microtubule organizing center. Its subcellular location is the centrosome. It is found in the midbody. Its function is as follows. Filament-forming cytoskeletal GTPase. May play a role in cytokinesis (Potential). In Homo sapiens (Human), this protein is Septin-1.